A 113-amino-acid polypeptide reads, in one-letter code: Putative pterin-4-alpha-carbinolamine dehydratase (113 aa).

The protein belongs to the pterin-4-alpha-carbinolamine dehydratase family.

It catalyses the reaction (4aS,6R)-4a-hydroxy-L-erythro-5,6,7,8-tetrahydrobiopterin = (6R)-L-erythro-6,7-dihydrobiopterin + H2O. This is Putative pterin-4-alpha-carbinolamine dehydratase from Bordetella bronchiseptica (strain ATCC BAA-588 / NCTC 13252 / RB50) (Alcaligenes bronchisepticus).